The sequence spans 81 residues: MNPLISAASVIAAGLSVGLASIGPGIGQGTAAGQAVEGIARQPEAEGKIRGTLLLSLAFMEALTIYGLVVALALLFANPFV.

Transmembrane regions (helical) follow at residues 7–27 (AASV…PGIG) and 57–77 (LAFM…LLFA).

Belongs to the ATPase C chain family. As to quaternary structure, F-type ATPases have 2 components, F(1) - the catalytic core - and F(0) - the membrane proton channel. F(1) has five subunits: alpha(3), beta(3), gamma(1), delta(1), epsilon(1). F(0) has four main subunits: a(1), b(1), b'(1) and c(10-14). The alpha and beta chains form an alternating ring which encloses part of the gamma chain. F(1) is attached to F(0) by a central stalk formed by the gamma and epsilon chains, while a peripheral stalk is formed by the delta, b and b' chains.

The protein localises to the plastid. It localises to the chloroplast thylakoid membrane. Its function is as follows. F(1)F(0) ATP synthase produces ATP from ADP in the presence of a proton or sodium gradient. F-type ATPases consist of two structural domains, F(1) containing the extramembraneous catalytic core and F(0) containing the membrane proton channel, linked together by a central stalk and a peripheral stalk. During catalysis, ATP synthesis in the catalytic domain of F(1) is coupled via a rotary mechanism of the central stalk subunits to proton translocation. Key component of the F(0) channel; it plays a direct role in translocation across the membrane. A homomeric c-ring of between 10-14 subunits forms the central stalk rotor element with the F(1) delta and epsilon subunits. This Cryptomeria japonica (Japanese cedar) protein is ATP synthase subunit c, chloroplastic.